We begin with the raw amino-acid sequence, 255 residues long: Diphthine synthase (255 aa).

S-adenosyl-L-methionine is bound by residues L9, D85, V88, 113–114 (SI), L164, A207, and H232.

It belongs to the diphthine synthase family. Homodimer.

The catalysed reaction is 2-[(3S)-amino-3-carboxypropyl]-L-histidyl-[translation elongation factor 2] + 3 S-adenosyl-L-methionine = diphthine-[translation elongation factor 2] + 3 S-adenosyl-L-homocysteine + 3 H(+). Its pathway is protein modification; peptidyl-diphthamide biosynthesis. Its function is as follows. S-adenosyl-L-methionine-dependent methyltransferase that catalyzes the trimethylation of the amino group of the modified target histidine residue in translation elongation factor 2 (EF-2), to form an intermediate called diphthine. The three successive methylation reactions represent the second step of diphthamide biosynthesis. This chain is Diphthine synthase, found in Methanococcus vannielii (strain ATCC 35089 / DSM 1224 / JCM 13029 / OCM 148 / SB).